Here is a 544-residue protein sequence, read N- to C-terminus: CTP synthase (544 aa).

The tract at residues 1-266 (MATNYIFVTG…DDFVCDRFRL (266 aa)) is amidoligase domain. Position 14 (Ser-14) interacts with CTP. Ser-14 provides a ligand contact to UTP. ATP-binding positions include 15–20 (SLGKGI) and Asp-72. The Mg(2+) site is built by Asp-72 and Glu-140. CTP is bound by residues 147–149 (DIE), 187–192 (KTKPTQ), and Lys-223. UTP-binding positions include 187–192 (KTKPTQ) and Lys-223. 239–241 (KDV) provides a ligand contact to ATP. Positions 291–542 (TIGMVGKYVE…VKAAKEHQGK (252 aa)) constitute a Glutamine amidotransferase type-1 domain. Gly-352 is an L-glutamine binding site. Cys-379 functions as the Nucleophile; for glutamine hydrolysis in the catalytic mechanism. Residues 380 to 383 (LGMQ), Glu-403, and Arg-470 contribute to the L-glutamine site. Catalysis depends on residues His-515 and Glu-517.

The protein belongs to the CTP synthase family. In terms of assembly, homotetramer.

The enzyme catalyses UTP + L-glutamine + ATP + H2O = CTP + L-glutamate + ADP + phosphate + 2 H(+). It carries out the reaction L-glutamine + H2O = L-glutamate + NH4(+). The catalysed reaction is UTP + NH4(+) + ATP = CTP + ADP + phosphate + 2 H(+). The protein operates within pyrimidine metabolism; CTP biosynthesis via de novo pathway; CTP from UDP: step 2/2. Its activity is regulated as follows. Allosterically activated by GTP, when glutamine is the substrate; GTP has no effect on the reaction when ammonia is the substrate. The allosteric effector GTP functions by stabilizing the protein conformation that binds the tetrahedral intermediate(s) formed during glutamine hydrolysis. Inhibited by the product CTP, via allosteric rather than competitive inhibition. In terms of biological role, catalyzes the ATP-dependent amination of UTP to CTP with either L-glutamine or ammonia as the source of nitrogen. Regulates intracellular CTP levels through interactions with the four ribonucleotide triphosphates. The chain is CTP synthase from Glaesserella parasuis serovar 5 (strain SH0165) (Haemophilus parasuis).